The sequence spans 230 residues: Uracil-DNA glycosylase (230 aa).

D71 (proton acceptor) is an active-site residue.

The protein belongs to the uracil-DNA glycosylase (UDG) superfamily. UNG family.

The protein localises to the cytoplasm. The enzyme catalyses Hydrolyzes single-stranded DNA or mismatched double-stranded DNA and polynucleotides, releasing free uracil.. In terms of biological role, excises uracil residues from the DNA which can arise as a result of misincorporation of dUMP residues by DNA polymerase or due to deamination of cytosine. This Nocardioides sp. (strain ATCC BAA-499 / JS614) protein is Uracil-DNA glycosylase.